The sequence spans 242 residues: Small ribosomal subunit protein uS3 (242 aa).

Positions 39–110 constitute a KH type-2 domain; that stretch reads IRRFIHKKYG…QVRINVVEVE (72 aa). A disordered region spans residues 216–242; it reads QSMPVGASPRRRGNRRPQQFEDRSNEG. The span at 233-242 shows a compositional bias: basic and acidic residues; that stretch reads QQFEDRSNEG.

Belongs to the universal ribosomal protein uS3 family. In terms of assembly, part of the 30S ribosomal subunit. Forms a tight complex with proteins S10 and S14.

Functionally, binds the lower part of the 30S subunit head. Binds mRNA in the 70S ribosome, positioning it for translation. The chain is Small ribosomal subunit protein uS3 from Prochlorococcus marinus (strain MIT 9303).